A 90-amino-acid polypeptide reads, in one-letter code: MAVKIRLKRMGSKKAPFYRVVVADSRFPRDGRFIEEIGTYNPIAQPAQVNIKEDKALEWMKKGAKPSDTVRSLFSNAGLMEKLHNEKNGK.

Belongs to the bacterial ribosomal protein bS16 family.

This chain is Small ribosomal subunit protein bS16, found in Shouchella clausii (strain KSM-K16) (Alkalihalobacillus clausii).